The following is a 637-amino-acid chain: Threonine--tRNA ligase (637 aa).

One can recognise a TGS domain in the interval 1-61 (MLNITLPDGS…TEDSSVQIIT (61 aa)). A catalytic region spans residues 242-533 (DHRKLGKQLD…LIENHAGSFP (292 aa)). Positions 333, 384, and 510 each coordinate Zn(2+).

This sequence belongs to the class-II aminoacyl-tRNA synthetase family. In terms of assembly, homodimer. Zn(2+) serves as cofactor.

Its subcellular location is the cytoplasm. The catalysed reaction is tRNA(Thr) + L-threonine + ATP = L-threonyl-tRNA(Thr) + AMP + diphosphate + H(+). Catalyzes the attachment of threonine to tRNA(Thr) in a two-step reaction: L-threonine is first activated by ATP to form Thr-AMP and then transferred to the acceptor end of tRNA(Thr). Also edits incorrectly charged L-seryl-tRNA(Thr). The polypeptide is Threonine--tRNA ligase (Neisseria meningitidis serogroup C (strain 053442)).